A 60-amino-acid polypeptide reads, in one-letter code: RICYTHKSLQAKTTKSCEGNTCYKMFIRTSREYISERGCGCPTAMWPYQTECCKGDRCNK.

Disulfide bonds link Cys-3/Cys-22, Cys-17/Cys-39, Cys-41/Cys-52, and Cys-53/Cys-58. An important for binding to L-type calcium channels region spans residues 41 to 48; sequence CPTAMWPY.

The protein belongs to the three-finger toxin family. Short-chain subfamily. L-type calcium blocker sub-subfamily. As to expression, expressed by the venom gland.

The protein localises to the secreted. Its function is as follows. This specific blocker of the L-type calcium channel (Cav1/CACNA1) is a smooth muscle relaxant and an inhibitor of cardiac contractions. This Dendroaspis jamesoni kaimosae (Eastern Jameson's mamba) protein is Toxin S4C8.